The chain runs to 191 residues: Apoptosis regulator BHRF1 (191 aa).

The interaction with host VRK2 stretch occupies residues 1–18; sequence MAYSTREILLALCIRDSR. Asparagine 22 carries an N-linked (GlcNAc...) asparagine; by host glycan. The BH1 signature appears at 89-109; it reads EIFHRGDPSLGRALAWMAWCM. An interaction with host VRK2 region spans residues 89–142; the sequence is EIFHRGDPSLGRALAWMAWCMHACRTLCCNQSTPYYVVDLSVRGMLEASEGLDG. A glycan (N-linked (GlcNAc...) asparagine; by host) is linked at asparagine 118. The short motif at 142-157 is the BH2 element; it reads GWIHQQGGWSTLIEDN. Residues 166 to 186 form a helical membrane-spanning segment; it reads WTLFLAGLTLSLLVICSYLFI.

Belongs to the Bcl-2 family. As to quaternary structure, interacts with isoform 1 of host VRK2; this interaction is involved in protecting cells from apoptosis. Interacts with host PRA1; this interaction seems to modulate BHRF1 anti-apoptotic activity. Interacts with host BCL2L11. Interacts with host BAD and BBC3. Interacts with BALF1; BALF1 acting as a negative regulator of the survival function of BHRF1. Interacts with host BECN1.

Its subcellular location is the host membrane. The protein resides in the host mitochondrion. Functionally, prevents premature death of the host cell during virus production, which would otherwise reduce the amount of progeny virus. Acts as a host B-cell leukemia/lymphoma 2 (Bcl-2) homolog, and interacts with pro-apoptotic proteins to prevent mitochondria permeabilization, release of cytochrome c and subsequent apoptosis of the host cell. In addition, plays a role in the inhibiton of host BECN1-mediated starvation-induced autophagy without affecting basal levels of autophagy. In Epstein-Barr virus (strain GD1) (HHV-4), this protein is Apoptosis regulator BHRF1.